Consider the following 411-residue polypeptide: 2,3-bisphosphoglycerate-independent phosphoglycerate mutase (411 aa).

This sequence belongs to the BPG-independent phosphoglycerate mutase family. A-PGAM subfamily.

The catalysed reaction is (2R)-2-phosphoglycerate = (2R)-3-phosphoglycerate. Its pathway is carbohydrate degradation; glycolysis; pyruvate from D-glyceraldehyde 3-phosphate: step 3/5. Catalyzes the interconversion of 2-phosphoglycerate and 3-phosphoglycerate. This chain is 2,3-bisphosphoglycerate-independent phosphoglycerate mutase, found in Thermococcus gammatolerans (strain DSM 15229 / JCM 11827 / EJ3).